A 177-amino-acid chain; its full sequence is Thymidine kinase (177 aa).

Position 11–18 (11–18) interacts with ATP; that stretch reads GPMLSGKS. Glu-83 functions as the Proton acceptor in the catalytic mechanism. Phe-113 serves as a coordination point for substrate. Zn(2+) contacts are provided by Cys-138 and Cys-141. 157-161 lines the substrate pocket; sequence IEIIG. Residues Cys-170 and Cys-173 each contribute to the Zn(2+) site.

It belongs to the thymidine kinase family. As to quaternary structure, homotetramer. Two molecules of substrate bind to each enzyme tetramer.

It catalyses the reaction thymidine + ATP = dTMP + ADP + H(+). In terms of biological role, phosphorylates thymidine and thymidine analogs, such as azidothymidine (AZT). Part of the salvage pathway for pyrimidine deoxyribonucleotide synthesis. This is Thymidine kinase (OPG101) from Monkeypox virus (strain Zaire-96-I-16) (MPX).